The chain runs to 109 residues: uncharacterized protein (109 aa).

This is an uncharacterized protein from Mycoplasma pneumoniae (strain ATCC 29342 / M129 / Subtype 1) (Mycoplasmoides pneumoniae).